Consider the following 124-residue polypeptide: MLVIFLGILGLLANQVLGLPIQAGGHLCSTDNPPQEELGYWCTYMESCKFCWECAHGICKNKVNESMPLIIENSYLTSCEVSRWYNQCTYGEGNGHYHVMDCSNPVPHNRPHQLRMKIYEKEDL.

A signal peptide spans 1–28; that stretch reads MLVIFLGILGLLANQVLGLPIQAGGHLC. N-linked (GlcNAc...) asparagine; by host glycosylation occurs at Asn64. The Prevents secretion from ER motif lies at 121–124; that stretch reads KEDL.

This sequence belongs to the asfivirus MGF 110 family.

The protein resides in the virion. Its subcellular location is the host endoplasmic reticulum-Golgi intermediate compartment. In terms of biological role, causes the redistribution of lumenal ER protein to an enlarged ERGIC compartment. This Ornithodoros (relapsing fever ticks) protein is Protein MGF 110-4L.